The sequence spans 356 residues: Phospho-2-dehydro-3-deoxyheptonate aldolase, Tyr-sensitive (356 aa).

The protein belongs to the class-I DAHP synthase family.

The enzyme catalyses D-erythrose 4-phosphate + phosphoenolpyruvate + H2O = 7-phospho-2-dehydro-3-deoxy-D-arabino-heptonate + phosphate. It functions in the pathway metabolic intermediate biosynthesis; chorismate biosynthesis; chorismate from D-erythrose 4-phosphate and phosphoenolpyruvate: step 1/7. Functionally, stereospecific condensation of phosphoenolpyruvate (PEP) and D-erythrose-4-phosphate (E4P) giving rise to 3-deoxy-D-arabino-heptulosonate-7-phosphate (DAHP). This is Phospho-2-dehydro-3-deoxyheptonate aldolase, Tyr-sensitive (aroF) from Salmonella typhi.